Reading from the N-terminus, the 509-residue chain is Inositol-3-phosphate synthase 1 (509 aa).

The protein belongs to the myo-inositol 1-phosphate synthase family. The cofactor is NAD(+). As to expression, highly expressed in anthers, but transcripts are undetectable in roots, leaves, flowers and embryos.

The protein localises to the cytoplasm. It catalyses the reaction D-glucose 6-phosphate = 1D-myo-inositol 3-phosphate. Its pathway is polyol metabolism; myo-inositol biosynthesis; myo-inositol from D-glucose 6-phosphate: step 1/2. Its function is as follows. Key enzyme in myo-inositol biosynthesis pathway that catalyzes the conversion of glucose 6-phosphate to 1-myo-inositol 1-phosphate in a NAD-dependent manner. Is a key enzyme in the phytic acid biosynthesis pathway in seeds. This is Inositol-3-phosphate synthase 1 from Oryza sativa subsp. japonica (Rice).